Reading from the N-terminus, the 205-residue chain is UPF0688 protein C1orf174 homolog (205 aa).

The span at 1 to 18 (MRKRKLSDRVRCSARLKN) shows a compositional bias: basic residues. 2 disordered regions span residues 1 to 128 (MRKR…PSKV) and 184 to 205 (AKEE…EGNI). The span at 46–63 (NTDKKSPKKLENDEKGLM) shows a compositional bias: basic and acidic residues. The span at 71–108 (INKTDNTASNESNAGNVNTCPSASPFSDLNEVSRNGLT) shows a compositional bias: polar residues. Residues 187–196 (EEEDDDDDYA) are compositionally biased toward acidic residues.

This sequence belongs to the UPF0688 family.

The protein localises to the nucleus. This chain is UPF0688 protein C1orf174 homolog, found in Xenopus laevis (African clawed frog).